A 394-amino-acid polypeptide reads, in one-letter code: Elongation factor Tu (394 aa).

The 195-residue stretch at lysine 10–glutamate 204 folds into the tr-type G domain. A G1 region spans residues glycine 19–threonine 26. Glycine 19–threonine 26 serves as a coordination point for GTP. A Mg(2+)-binding site is contributed by threonine 26. The tract at residues glycine 60–asparagine 64 is G2. Residues aspartate 81 to glycine 84 are G3. Residues aspartate 81–histidine 85 and asparagine 136–aspartate 139 contribute to the GTP site. Residues asparagine 136–aspartate 139 form a G4 region. The G5 stretch occupies residues serine 174–leucine 176.

The protein belongs to the TRAFAC class translation factor GTPase superfamily. Classic translation factor GTPase family. EF-Tu/EF-1A subfamily. Monomer.

It localises to the cytoplasm. It carries out the reaction GTP + H2O = GDP + phosphate + H(+). Its function is as follows. GTP hydrolase that promotes the GTP-dependent binding of aminoacyl-tRNA to the A-site of ribosomes during protein biosynthesis. The protein is Elongation factor Tu of Chlamydia caviae (strain ATCC VR-813 / DSM 19441 / 03DC25 / GPIC) (Chlamydophila caviae).